Here is a 185-residue protein sequence, read N- to C-terminus: Elongation factor P (185 aa).

This sequence belongs to the elongation factor P family.

The protein localises to the cytoplasm. It participates in protein biosynthesis; polypeptide chain elongation. In terms of biological role, involved in peptide bond synthesis. Stimulates efficient translation and peptide-bond synthesis on native or reconstituted 70S ribosomes in vitro. Probably functions indirectly by altering the affinity of the ribosome for aminoacyl-tRNA, thus increasing their reactivity as acceptors for peptidyl transferase. This Lactococcus lactis subsp. lactis (strain IL1403) (Streptococcus lactis) protein is Elongation factor P (efp).